The chain runs to 475 residues: Putative aldehyde dehydrogenase SSP0762 (475 aa).

Residue Gly-201 to Gly-207 participates in NAD(+) binding. Catalysis depends on residues Glu-245 and Cys-279.

Belongs to the aldehyde dehydrogenase family.

The enzyme catalyses an aldehyde + NAD(+) + H2O = a carboxylate + NADH + 2 H(+). The chain is Putative aldehyde dehydrogenase SSP0762 from Staphylococcus saprophyticus subsp. saprophyticus (strain ATCC 15305 / DSM 20229 / NCIMB 8711 / NCTC 7292 / S-41).